Reading from the N-terminus, the 481-residue chain is uncharacterized protein (481 aa).

13 helical membrane-spanning segments follow: residues 3–23, 33–53, 75–95, 99–119, 122–142, 155–175, 196–216, 241–261, 264–284, 303–323, 351–371, 400–420, and 443–463; these read YLPM…LLHG, FITA…YYYF, QAII…GMGE, NNMF…IVLA, IFNL…LVFL, YMIM…FLLA, IYGG…LPPF, FVLV…DYFA, HAVL…MALL, VATG…FHAI, GGLL…KLAI, IIMI…FYLI, and VFSL…PDIV.

The protein resides in the cell membrane. This is an uncharacterized protein from Methanocaldococcus jannaschii (strain ATCC 43067 / DSM 2661 / JAL-1 / JCM 10045 / NBRC 100440) (Methanococcus jannaschii).